A 254-amino-acid chain; its full sequence is Serotonin N-acetyltransferase 1, chloroplastic (254 aa).

Residues Met-1 to Ser-83 constitute a chloroplast transit peptide. The region spanning Val-119 to Phe-254 is the N-acetyltransferase domain.

The protein resides in the plastid. It localises to the chloroplast. The protein localises to the nucleus. It catalyses the reaction a 2-arylethylamine + acetyl-CoA = an N-acetyl-2-arylethylamine + CoA + H(+). Its pathway is aromatic compound metabolism; melatonin biosynthesis; melatonin from serotonin: step 1/2. Functionally, catalyzes the N-acetylation of serotonin into N-acetylserotonin, the penultimate step in the synthesis of melatonin. Catalyzes in vitro the N-acetylation of tryptamine to produce N-acetyltryptamine, 5-methoxytryptamine to produce melatonin and tyramine to produce N-acetyltyramine. Acetyltransferase required for geminivirus infection and systemic spread. The polypeptide is Serotonin N-acetyltransferase 1, chloroplastic (Oryza sativa subsp. indica (Rice)).